Consider the following 591-residue polypeptide: Aspartate--tRNA(Asp/Asn) ligase (591 aa).

Glu170 lines the L-aspartate pocket. Residues 194–197 are aspartate; sequence QLFK. Arg216 contacts L-aspartate. Residues 216-218 and Gln225 each bind ATP; that span reads RDE. His448 lines the L-aspartate pocket. Glu482 contacts ATP. Arg489 is a binding site for L-aspartate. 534-537 is an ATP binding site; sequence GWDR. The disordered stretch occupies residues 559–591; sequence GGVDPLTDAPAPITEQQRKESGIDVKPEPSKPH. Residues 574 to 591 are compositionally biased toward basic and acidic residues; the sequence is QQRKESGIDVKPEPSKPH.

This sequence belongs to the class-II aminoacyl-tRNA synthetase family. Type 1 subfamily. In terms of assembly, homodimer.

Its subcellular location is the cytoplasm. It catalyses the reaction tRNA(Asx) + L-aspartate + ATP = L-aspartyl-tRNA(Asx) + AMP + diphosphate. Aspartyl-tRNA synthetase with relaxed tRNA specificity since it is able to aspartylate not only its cognate tRNA(Asp) but also tRNA(Asn). Reaction proceeds in two steps: L-aspartate is first activated by ATP to form Asp-AMP and then transferred to the acceptor end of tRNA(Asp/Asn). The protein is Aspartate--tRNA(Asp/Asn) ligase of Mycolicibacterium paratuberculosis (strain ATCC BAA-968 / K-10) (Mycobacterium paratuberculosis).